The primary structure comprises 570 residues: MTKATKEQKSLVKNRGAELVVDCLVEQGVTHVFGIPGAKIDAVFDALQDKGPEIIVARHEQNAAFMAQAVGRLTGKPGVVLVTSGPGASNLATGLLTANTEGDPVVALAGNVIRADRLKRTHQSLDNAALFQPITKYSVEVQDVKNIPEAVTNAFRIASAGQAGAAFVSFPQDVVNEVTNTKNVRAVAAPKLGPAADDAISAAIAKIQTAKLPVVLVGMKGGRPEAIKAVRKLLKKVQLPFVETYQAAGTLSRDLEDQYFGRIGLFRNQPGDLLLEQADVVLTIGYDPIEYDPKFWNINGDRTIIHLDEIIADIDHAYQPDLELIGDIPSTINHIEHDAVKVEFAEREQKILSDLKQYMHEGEQVPADWKSDRAHPLEIVKELRNAVDDHVTVTCDIGSHAIWMSRYFRSYEPLTLMISNGMQTLGVALPWAIGASLVKPGEKVVSVSGDGGFLFSAMELETAVRLKAPIVHIVWNDSTYDMVAFQQLKKYNRTSAVDFGNIDIVKYAESFGATGLRVESPDQLADVLRQGMNAEGPVIIDVPVDYSDNINLASDKLPKEFGELMKTKAL.

E60 contributes to the thiamine diphosphate binding site. Residues Q162, 266–287 (FRNQ…IGYD), and 308–327 (DEII…LIGD) contribute to the FAD site. Residues 399–479 (SHAIWMSRYF…IVHIVWNDST (81 aa)) are thiamine pyrophosphate binding. Residue D450 participates in Mg(2+) binding.

The protein belongs to the TPP enzyme family. Requires Mg(2+) as cofactor. Thiamine diphosphate serves as cofactor.

The enzyme catalyses 2 pyruvate + H(+) = (2S)-2-acetolactate + CO2. The protein operates within polyol metabolism; (R,R)-butane-2,3-diol biosynthesis; (R,R)-butane-2,3-diol from pyruvate: step 1/3. This Bacillus subtilis (strain 168) protein is Acetolactate synthase (alsS).